A 567-amino-acid chain; its full sequence is Arginine--tRNA ligase (567 aa).

The short motif at 121–131 is the 'HIGH' region element; it reads ANPNGPLHVGH.

The protein belongs to the class-I aminoacyl-tRNA synthetase family.

The protein localises to the cytoplasm. It catalyses the reaction tRNA(Arg) + L-arginine + ATP = L-arginyl-tRNA(Arg) + AMP + diphosphate. The sequence is that of Arginine--tRNA ligase from Methanococcoides burtonii (strain DSM 6242 / NBRC 107633 / OCM 468 / ACE-M).